The sequence spans 428 residues: Kynureninase (428 aa).

Pyridoxal 5'-phosphate-binding positions include Thr104, Thr105, 132 to 135 (FPSD), Asp213, His216, and Tyr238. Lys239 bears the N6-(pyridoxal phosphate)lysine mark. Pyridoxal 5'-phosphate-binding residues include Trp267 and Thr295.

It belongs to the kynureninase family. In terms of assembly, homodimer. The cofactor is pyridoxal 5'-phosphate.

The enzyme catalyses L-kynurenine + H2O = anthranilate + L-alanine + H(+). The catalysed reaction is 3-hydroxy-L-kynurenine + H2O = 3-hydroxyanthranilate + L-alanine + H(+). Its pathway is amino-acid degradation; L-kynurenine degradation; L-alanine and anthranilate from L-kynurenine: step 1/1. The protein operates within cofactor biosynthesis; NAD(+) biosynthesis; quinolinate from L-kynurenine: step 2/3. Functionally, catalyzes the cleavage of L-kynurenine (L-Kyn) and L-3-hydroxykynurenine (L-3OHKyn) into anthranilic acid (AA) and 3-hydroxyanthranilic acid (3-OHAA), respectively. The polypeptide is Kynureninase (Bacillus cereus (strain ZK / E33L)).